We begin with the raw amino-acid sequence, 286 residues long: Pantothenate synthetase (286 aa).

30–37 provides a ligand contact to ATP; it reads MGALHEGH. H37 (proton donor) is an active-site residue. Q61 serves as a coordination point for (R)-pantoate. Q61 is a binding site for beta-alanine. 147-150 contributes to the ATP binding site; it reads GEKD. (R)-pantoate is bound at residue Q153. Residues L176 and 184 to 187 each bind ATP; that span reads HSSR.

Belongs to the pantothenate synthetase family. Homodimer.

The protein resides in the cytoplasm. It carries out the reaction (R)-pantoate + beta-alanine + ATP = (R)-pantothenate + AMP + diphosphate + H(+). It participates in cofactor biosynthesis; (R)-pantothenate biosynthesis; (R)-pantothenate from (R)-pantoate and beta-alanine: step 1/1. In terms of biological role, catalyzes the condensation of pantoate with beta-alanine in an ATP-dependent reaction via a pantoyl-adenylate intermediate. In Bartonella tribocorum (strain CIP 105476 / IBS 506), this protein is Pantothenate synthetase.